We begin with the raw amino-acid sequence, 256 residues long: Geranylgeranylglyceryl phosphate synthase (256 aa).

Residues Asp28 and Ser53 each coordinate Mg(2+). Sn-glycerol 1-phosphate is bound by residues 172–178, 203–204, and 225–226; these read YLEAGSG, GG, and GT.

This sequence belongs to the GGGP/HepGP synthase family. Group II subfamily. Requires Mg(2+) as cofactor.

The protein resides in the cytoplasm. It carries out the reaction sn-glycerol 1-phosphate + (2E,6E,10E)-geranylgeranyl diphosphate = sn-3-O-(geranylgeranyl)glycerol 1-phosphate + diphosphate. The protein operates within membrane lipid metabolism; glycerophospholipid metabolism. In terms of biological role, prenyltransferase that catalyzes the transfer of the geranylgeranyl moiety of geranylgeranyl diphosphate (GGPP) to the C3 hydroxyl of sn-glycerol-1-phosphate (G1P). This reaction is the first ether-bond-formation step in the biosynthesis of archaeal membrane lipids. The protein is Geranylgeranylglyceryl phosphate synthase of Methanococcus maripaludis (strain C5 / ATCC BAA-1333).